The following is a 163-amino-acid chain: 6,7-dimethyl-8-ribityllumazine synthase (163 aa).

5-amino-6-(D-ribitylamino)uracil is bound by residues Phe27, 58 to 60 (ALE), and 87 to 89 (CVV). 92–93 (DT) is a binding site for (2S)-2-hydroxy-3-oxobutyl phosphate. Catalysis depends on His95, which acts as the Proton donor. Residue Asn120 coordinates 5-amino-6-(D-ribitylamino)uracil. Residue Arg134 coordinates (2S)-2-hydroxy-3-oxobutyl phosphate.

It belongs to the DMRL synthase family.

It carries out the reaction (2S)-2-hydroxy-3-oxobutyl phosphate + 5-amino-6-(D-ribitylamino)uracil = 6,7-dimethyl-8-(1-D-ribityl)lumazine + phosphate + 2 H2O + H(+). It functions in the pathway cofactor biosynthesis; riboflavin biosynthesis; riboflavin from 2-hydroxy-3-oxobutyl phosphate and 5-amino-6-(D-ribitylamino)uracil: step 1/2. Functionally, catalyzes the formation of 6,7-dimethyl-8-ribityllumazine by condensation of 5-amino-6-(D-ribitylamino)uracil with 3,4-dihydroxy-2-butanone 4-phosphate. This is the penultimate step in the biosynthesis of riboflavin. This chain is 6,7-dimethyl-8-ribityllumazine synthase, found in Nitrobacter hamburgensis (strain DSM 10229 / NCIMB 13809 / X14).